The following is an 87-amino-acid chain: Pyocin-S2 immunity protein (87 aa).

The protein belongs to the colicins ColE2/ColE8/ColE9 and pyocins S1/S2 family.

This Pseudomonas aeruginosa (strain ATCC 15692 / DSM 22644 / CIP 104116 / JCM 14847 / LMG 12228 / 1C / PRS 101 / PAO1) protein is Pyocin-S2 immunity protein (imm2).